A 298-amino-acid polypeptide reads, in one-letter code: HTH-type transcriptional regulator ArgP (298 aa).

The 57-residue stretch at 4–60 folds into the HTH lysR-type domain; that stretch reads LDYRWIEALDSVVSKGSFERAAEQLFISQSAVSQRIKQLEKYLAQPVLIREQPPRPT. The H-T-H motif DNA-binding region spans 21–40; sequence FERAAEQLFISQSAVSQRIK.

It belongs to the LysR transcriptional regulatory family. As to quaternary structure, homodimer.

Functionally, controls the transcription of genes involved in arginine and lysine metabolism. The chain is HTH-type transcriptional regulator ArgP from Vibrio cholerae serotype O1 (strain ATCC 39541 / Classical Ogawa 395 / O395).